Reading from the N-terminus, the 346-residue chain is Low-temperature-induced cysteine proteinase (346 aa).

A propeptide spans 1 to 17 (KLSKNKSDRYLPKVGDS) (activation peptide). 5 cysteine pairs are disulfide-bonded: Cys39/Cys81, Cys73/Cys114, Cys172/Cys223, Cys256/Cys268, and Cys262/Cys283. Cys42 is an active-site residue. Active-site residues include His178 and Asn198. A glycan (N-linked (GlcNAc...) asparagine) is linked at Asn215. Positions 238–346 (NPPKPAPSPP…FGNGGKKSSS (109 aa)) are cleaved as a propeptide — removed in mature form.

Belongs to the peptidase C1 family.

The chain is Low-temperature-induced cysteine proteinase from Solanum lycopersicum (Tomato).